We begin with the raw amino-acid sequence, 235 residues long: Uridylate kinase (235 aa).

An ATP-binding site is contributed by 9-12 (KLSG). Position 51 (G51) interacts with UMP. G52 and R56 together coordinate ATP. UMP-binding positions include D71 and 133 to 140 (SGNPFFTT). Residues T160, Y166, and D169 each contribute to the ATP site.

Belongs to the UMP kinase family. In terms of assembly, homohexamer.

The protein resides in the cytoplasm. The enzyme catalyses UMP + ATP = UDP + ADP. The protein operates within pyrimidine metabolism; CTP biosynthesis via de novo pathway; UDP from UMP (UMPK route): step 1/1. Inhibited by UTP. Its function is as follows. Catalyzes the reversible phosphorylation of UMP to UDP. The polypeptide is Uridylate kinase (Gloeobacter violaceus (strain ATCC 29082 / PCC 7421)).